The primary structure comprises 147 residues: Gastrula-specific protein 17 (147 aa).

The interval 1–119 (MSQNLDFLAL…TQVYGNHQPG (119 aa)) is disordered. Composition is skewed to polar residues over residues 20 to 36 (SPTS…STPP), 45 to 57 (RQIS…YTNP), and 74 to 88 (LLQN…SPTA).

This chain is Gastrula-specific protein 17 (gs17), found in Xenopus laevis (African clawed frog).